Here is an 81-residue protein sequence, read N- to C-terminus: Cytochrome b559 subunit alpha (81 aa).

A helical membrane pass occupies residues 21–35 (VIHALTIPALFLAGW). Histidine 23 provides a ligand contact to heme.

The protein belongs to the PsbE/PsbF family. In terms of assembly, heterodimer of an alpha subunit and a beta subunit. PSII is composed of 1 copy each of membrane proteins PsbA, PsbB, PsbC, PsbD, PsbE, PsbF, PsbH, PsbI, PsbJ, PsbK, PsbL, PsbM, PsbT, PsbX, PsbY, PsbZ, Psb30/Ycf12, peripheral proteins PsbO, CyanoQ (PsbQ), PsbU, PsbV and a large number of cofactors. It forms dimeric complexes. The cofactor is heme b.

It is found in the cellular thylakoid membrane. Its function is as follows. This b-type cytochrome is tightly associated with the reaction center of photosystem II (PSII). PSII is a light-driven water:plastoquinone oxidoreductase that uses light energy to abstract electrons from H(2)O, generating O(2) and a proton gradient subsequently used for ATP formation. It consists of a core antenna complex that captures photons, and an electron transfer chain that converts photonic excitation into a charge separation. The sequence is that of Cytochrome b559 subunit alpha from Synechococcus sp. (strain JA-2-3B'a(2-13)) (Cyanobacteria bacterium Yellowstone B-Prime).